Reading from the N-terminus, the 198-residue chain is Protein RD3-like (198 aa).

Residues 28–57 (KTLLRELKWHLKERERLIQEIENEQKVKKT) are a coiled coil. Positions 133-168 (GSEQEDLEDSGSMDCSAPSVIQGDSSKRADKDEIPT) are disordered. Basic and acidic residues predominate over residues 157–166 (SSKRADKDEI).

The polypeptide is Protein RD3-like (RD3L) (Homo sapiens (Human)).